The following is a 213-amino-acid chain: Putative manganese efflux pump MntP (213 aa).

The next 6 helical transmembrane spans lie at 3-23, 36-56, 67-87, 130-150, 152-172, and 187-207; these read ILSIVLTGFGLAMDAFAVSVA, ALKVALFFGGFQALMPLIGWG, AFDHWIAFILLGFIGGKMIFE, LAIATSIDALAVGVSFAFLGI, IVQTIIIIGIITFVLCFLGVI, and IVGGVILILIGINILLEHTGI.

It belongs to the MntP (TC 9.B.29) family.

It localises to the cell membrane. In terms of biological role, probably functions as a manganese efflux pump. The polypeptide is Putative manganese efflux pump MntP (Clostridium perfringens (strain SM101 / Type A)).